Here is a 158-residue protein sequence, read N- to C-terminus: Ribosome maturation factor RimP (158 aa).

Belongs to the RimP family.

It is found in the cytoplasm. Functionally, required for maturation of 30S ribosomal subunits. The polypeptide is Ribosome maturation factor RimP (Leuconostoc mesenteroides subsp. mesenteroides (strain ATCC 8293 / DSM 20343 / BCRC 11652 / CCM 1803 / JCM 6124 / NCDO 523 / NBRC 100496 / NCIMB 8023 / NCTC 12954 / NRRL B-1118 / 37Y)).